The following is a 750-amino-acid chain: Photosystem I P700 chlorophyll a apoprotein A1 (750 aa).

Helical transmembrane passes span 70–93 (VFSAHFGQLAIILIWLSGMYFHGA), 156–179 (LYCTAIGALIFAGLMLFAGWFHYH), 195–219 (LNHHLAGLLGLGSLGWAGHQVHVSL), 291–309 (TAHHHLAIGVLFLVAGHMY), 346–369 (WHAQLALNLAMLGSLTIIVAHHMY), 385–411 (LSLFTHHMWIGGFLVVGAAAHAAIFMV), 433–455 (AIISHLNWVCIFLGFHSFGLYIH), and 531–549 (FLVHHIHAFTIHVTVLILL). [4Fe-4S] cluster is bound by residues Cys573 and Cys582. The next 2 helical transmembrane spans lie at 589-610 (HVFLGLFWMYNSISIVIFHFSW) and 664-686 (LSAYGLLFLGAHFVWAFSLMFLF). A chlorophyll a'-binding site is contributed by His675. Chlorophyll a contacts are provided by Met683 and Tyr691. Trp692 serves as a coordination point for phylloquinone. A helical membrane pass occupies residues 724 to 744 (AVGVAHYLLGGIATTWAFFLA).

It belongs to the PsaA/PsaB family. As to quaternary structure, the PsaA/B heterodimer binds the P700 chlorophyll special pair and subsequent electron acceptors. PSI consists of a core antenna complex that captures photons, and an electron transfer chain that converts photonic excitation into a charge separation. The eukaryotic PSI reaction center is composed of at least 11 subunits. The cofactor is P700 is a chlorophyll a/chlorophyll a' dimer, A0 is one or more chlorophyll a, A1 is one or both phylloquinones and FX is a shared 4Fe-4S iron-sulfur center..

The protein localises to the plastid. It localises to the chloroplast thylakoid membrane. The enzyme catalyses reduced [plastocyanin] + hnu + oxidized [2Fe-2S]-[ferredoxin] = oxidized [plastocyanin] + reduced [2Fe-2S]-[ferredoxin]. In terms of biological role, psaA and PsaB bind P700, the primary electron donor of photosystem I (PSI), as well as the electron acceptors A0, A1 and FX. PSI is a plastocyanin-ferredoxin oxidoreductase, converting photonic excitation into a charge separation, which transfers an electron from the donor P700 chlorophyll pair to the spectroscopically characterized acceptors A0, A1, FX, FA and FB in turn. Oxidized P700 is reduced on the lumenal side of the thylakoid membrane by plastocyanin. The protein is Photosystem I P700 chlorophyll a apoprotein A1 of Angiopteris evecta (Mule's foot fern).